We begin with the raw amino-acid sequence, 784 residues long: Toll-like receptor 2 (784 aa).

A signal peptide spans 1 to 20 (MPRALWTAWVWAVIILSTEG). Residues 21-587 (ASDQASSLSC…ARLSLSECHR (567 aa)) lie on the Extracellular side of the membrane. Cysteines 30 and 36 form a disulfide. 19 LRR repeats span residues 54–77 (VKSL…RCVN), 78–101 (LKTL…HLRN), 102–125 (LEYL…SLYV), 126–150 (LKFL…HLPN), 151–175 (LRTL…GLTF), 176–199 (LEEL…SIQN), 200–223 (ISHL…IVSS), 224–250 (LDCL…MSTS), 251–278 (VKKL…YVSG), 279–308 (ILEV…HLGN), 309–337 (VETL…LTGK), 338–361 (VKRV…HLKS), 362–388 (LEYL…AWPF), 389–414 (LQTL…TLEN), 415–437 (LNSL…WPGK), 438–457 (MKQL…CLPQ), 458–478 (TLEI…ILPQ), 479–500 (LKEL…FLPV), and 501–524 (LXVM…SFQQ). A glycan (N-linked (GlcNAc...) asparagine) is linked at N114. N-linked (GlcNAc...) asparagine glycosylation occurs at N199. A disulfide bridge connects residues C353 and C382. C432 and C454 are disulfide-bonded. N-linked (GlcNAc...) asparagine glycosylation is present at N442. The LRRCT domain occupies 525–579 (LKTLEAGGNNFICSCDFLSFTQGQQALGRVLVDWPDDYHCDSPSHVRGQRVQDAR). Residues 588-608 (AAVVSAACCALFLLLLLMGVL) form a helical membrane-spanning segment. Residues 609–784 (CHRFHGLWYM…WLNLRAAIRS (176 aa)) are Cytoplasmic-facing. The TIR domain maps to 639-782 (ICYDAFVSYS…GFWLNLRAAI (144 aa)). Residue K754 forms a Glycyl lysine isopeptide (Lys-Gly) (interchain with G-Cter in ubiquitin) linkage. Residues 761-778 (YLEWPVDETQQEGFWLNL) carry the ATG16L1-binding motif motif.

Belongs to the Toll-like receptor family. As to quaternary structure, interacts with LY96, TLR1 and TLR6 (via extracellular domain). TLR2 seems to exist in heterodimers with either TLR1 or TLR6 before stimulation by the ligand. The heterodimers form bigger oligomers in response to their corresponding ligands as well as further heterotypic associations with other receptors such as CD14 and/or CD36. Binds MYD88 (via TIR domain). Interacts with TICAM1. Interacts with CNPY3. Interacts with ATG16L1. Interacts with PPP1R11. Interacts with TICAM2. Interacts with TIRAP. Ubiquitinated at Lys-754 by PPP1R11, leading to its degradation. Deubiquitinated by USP2. In terms of processing, glycosylation of Asn-442 is critical for secretion of the N-terminal ectodomain of TLR2.

Its subcellular location is the membrane. It is found in the cytoplasmic vesicle. It localises to the phagosome membrane. The protein localises to the membrane raft. Its function is as follows. Cooperates with LY96 to mediate the innate immune response to bacterial lipoproteins and other microbial cell wall components. Cooperates with TLR1 or TLR6 to mediate the innate immune response to bacterial lipoproteins or lipopeptides. Acts via MYD88 and TRAF6, leading to NF-kappa-B activation, cytokine secretion and the inflammatory response. May also promote apoptosis in response to lipoproteins. Forms activation clusters composed of several receptors depending on the ligand, these clusters trigger signaling from the cell surface and subsequently are targeted to the Golgi in a lipid-raft dependent pathway. Forms the cluster TLR2:TLR6:CD14:CD36 in response to diacylated lipopeptides and TLR2:TLR1:CD14 in response to triacylated lipopeptides. The polypeptide is Toll-like receptor 2 (TLR2) (Bos indicus (Zebu)).